The primary structure comprises 472 residues: 2-oxoisovalerate dehydrogenase subunit alpha 1, mitochondrial (472 aa).

The transit peptide at 1–56 (MAIWFARSKTLVSSLRHNLNLSTILIKRDYSHRPIFYTTSQLSSTAYLSPFGSLRH) directs the protein to the mitochondrion. 185 to 187 (QYR) is a thiamine diphosphate binding site. K(+) contacts are provided by S234, T239, and Q240.

This sequence belongs to the BCKDHA family. Heterotetramer of alpha and beta chains. It depends on thiamine diphosphate as a cofactor.

Its subcellular location is the mitochondrion matrix. It carries out the reaction N(6)-[(R)-lipoyl]-L-lysyl-[protein] + 3-methyl-2-oxobutanoate + H(+) = N(6)-[(R)-S(8)-2-methylpropanoyldihydrolipoyl]-L-lysyl-[protein] + CO2. The branched-chain alpha-keto dehydrogenase complex catalyzes the overall conversion of alpha-keto acids to acyl-CoA and CO(2). It contains multiple copies of three enzymatic components: branched-chain alpha-keto acid decarboxylase (E1), lipoamide acyltransferase (E2) and lipoamide dehydrogenase (E3). Required during sugar starvation. The polypeptide is 2-oxoisovalerate dehydrogenase subunit alpha 1, mitochondrial (Arabidopsis thaliana (Mouse-ear cress)).